A 225-amino-acid chain; its full sequence is 2-C-methyl-D-erythritol 4-phosphate cytidylyltransferase (225 aa).

The protein belongs to the IspD/TarI cytidylyltransferase family. IspD subfamily.

It catalyses the reaction 2-C-methyl-D-erythritol 4-phosphate + CTP + H(+) = 4-CDP-2-C-methyl-D-erythritol + diphosphate. It functions in the pathway isoprenoid biosynthesis; isopentenyl diphosphate biosynthesis via DXP pathway; isopentenyl diphosphate from 1-deoxy-D-xylulose 5-phosphate: step 2/6. Its function is as follows. Catalyzes the formation of 4-diphosphocytidyl-2-C-methyl-D-erythritol from CTP and 2-C-methyl-D-erythritol 4-phosphate (MEP). The protein is 2-C-methyl-D-erythritol 4-phosphate cytidylyltransferase of Prochlorococcus marinus (strain NATL2A).